We begin with the raw amino-acid sequence, 360 residues long: Protein phosphatase methylesterase 1 (360 aa).

Residues 26–50 are disordered; it reads DEDDIPEPAVMPPTGNSSSTANTED. Active-site residues include serine 167, aspartate 192, and histidine 316.

Belongs to the AB hydrolase superfamily.

The catalysed reaction is [phosphatase 2A protein]-C-terminal L-leucine methyl ester + H2O = [phosphatase 2A protein]-C-terminal L-leucine + methanol + H(+). Functionally, demethylates proteins that have been reversibly carboxymethylated. Demethylates the phosphatase PP2A catalytic subunit. Involved in the regulation of filamentous growth. This chain is Protein phosphatase methylesterase 1 (PPE1), found in Candida albicans (strain SC5314 / ATCC MYA-2876) (Yeast).